A 299-amino-acid chain; its full sequence is Sulfate adenylyltransferase subunit 2 (299 aa).

The segment at 276–299 (EREGRVIDHDSAGSMEKKKREGYF) is disordered.

It belongs to the PAPS reductase family. CysD subfamily. In terms of assembly, heterodimer composed of CysD, the smaller subunit, and CysN.

The enzyme catalyses sulfate + ATP + H(+) = adenosine 5'-phosphosulfate + diphosphate. The protein operates within sulfur metabolism; hydrogen sulfide biosynthesis; sulfite from sulfate: step 1/3. With CysN forms the ATP sulfurylase (ATPS) that catalyzes the adenylation of sulfate producing adenosine 5'-phosphosulfate (APS) and diphosphate, the first enzymatic step in sulfur assimilation pathway. APS synthesis involves the formation of a high-energy phosphoric-sulfuric acid anhydride bond driven by GTP hydrolysis by CysN coupled to ATP hydrolysis by CysD. This is Sulfate adenylyltransferase subunit 2 from Pseudoalteromonas translucida (strain TAC 125).